We begin with the raw amino-acid sequence, 615 residues long: MTIEEKLKLLPEKPGVYIMKDKSGKIIYVGKAVVLKNRVRQYFQNKEKQLPKVKVMLSHVEDFEYIVTDTELEALMLECNLIKKYKPKYNVLLKDDKNYPYIKVTVNEEYPRIMFTRRIEPDGAKYFGPYSSAFAVRETIKLVRKMFPIRTCNKNIEKDMGKVRECLYYHIGLCSAPCTNKINKEDYIKLVDQAVLFLDGKRDWLIQKLKEDMKKAAEELRFEEAARIRDQIFAIERTSEKQKVVSVGEDEQDIISMARSADISCIQVFFVRDGKLSGREHYYMKNTEGMERGEIISSFIKQFYEGAPYIPKEIITDVELDESELLSEWLSQKRGNKVFITIPVRGKKKELVDMVYQNALEALKNDISIREEISKAQVVLELSNLVGLDYAKRIEAYDISNTRGQDNVGSMVVFVDGKPKKSQYRKFNIKYVEGQDDYESMREVIERRFLHAIEEKELIEKGELEEDKAKFAEMPDLIFVDGGIGHVNAVLQVLSGLGISIPVYGMVKDSKHRTRGLVSPQGEIDIPMTSKAFRLIAQIQEEAHRFAITFHKEKQSKRFKSELLNIPGIGEKRAKALYDAFKSIEEIKRASVEDLKKVEGMNEKAAQAVYEYFRK.

A GIY-YIG domain is found at 12–91 (EKPGVYIMKD…IKKYKPKYNV (80 aa)). The 36-residue stretch at 203-238 (DWLIQKLKEDMKKAAEELRFEEAARIRDQIFAIERT) folds into the UVR domain.

It belongs to the UvrC family. In terms of assembly, interacts with UvrB in an incision complex.

Its subcellular location is the cytoplasm. Functionally, the UvrABC repair system catalyzes the recognition and processing of DNA lesions. UvrC both incises the 5' and 3' sides of the lesion. The N-terminal half is responsible for the 3' incision and the C-terminal half is responsible for the 5' incision. This chain is UvrABC system protein C, found in Thermoanaerobacter pseudethanolicus (strain ATCC 33223 / 39E) (Clostridium thermohydrosulfuricum).